Reading from the N-terminus, the 1120-residue chain is Isoleucine--tRNA ligase (1120 aa).

The short motif at 64 to 74 (PFANGLPHYGH) is the 'HIGH' region element. Residues 647 to 651 (KLSKR) carry the 'KMSKS' region motif. Residue Lys650 coordinates ATP.

This sequence belongs to the class-I aminoacyl-tRNA synthetase family. IleS type 2 subfamily. Monomer. Zn(2+) is required as a cofactor.

The protein localises to the cytoplasm. It catalyses the reaction tRNA(Ile) + L-isoleucine + ATP = L-isoleucyl-tRNA(Ile) + AMP + diphosphate. Catalyzes the attachment of isoleucine to tRNA(Ile). As IleRS can inadvertently accommodate and process structurally similar amino acids such as valine, to avoid such errors it has two additional distinct tRNA(Ile)-dependent editing activities. One activity is designated as 'pretransfer' editing and involves the hydrolysis of activated Val-AMP. The other activity is designated 'posttransfer' editing and involves deacylation of mischarged Val-tRNA(Ile). This chain is Isoleucine--tRNA ligase, found in Ehrlichia canis (strain Jake).